We begin with the raw amino-acid sequence, 522 residues long: TNF receptor-associated factor 6 (522 aa).

Residues 1 to 354 (MSLLNCENSC…EAQQCNGIYI (354 aa)) form an interaction with TAX1BP1 region. Residues 70–109 (CPICLMALREAVQTPCGHRFCKACIIKSIRDAGHKCPVDN) form an RING-type; degenerate zinc finger. Lys-124 is covalently cross-linked (Glycyl lysine isopeptide (Lys-Gly) (interchain with G-Cter in SUMO); alternate). A Glycyl lysine isopeptide (Lys-Gly) (interchain with G-Cter in ubiquitin); alternate cross-link involves residue Lys-124. Lys-142 participates in a covalent cross-link: Glycyl lysine isopeptide (Lys-Gly) (interchain with G-Cter in SUMO). 2 TRAF-type zinc fingers span residues 150 to 202 (DHQA…EDKE) and 203 to 259 (IHDQ…NHLA). The stretch at 288-348 (YVSEVRNFQE…DKVAEIEAQQ (61 aa)) forms a coiled coil. Lys-319 participates in a covalent cross-link: Glycyl lysine isopeptide (Lys-Gly) (interchain with G-Cter in ubiquitin). The region spanning 350-499 (NGIYIWKIGN…DDTLLVRCEV (150 aa)) is the MATH domain. The interval 355-522 (WKIGNFGMHL…FQPRSTDSGV (168 aa)) is interaction with TANK. Lys-453 is covalently cross-linked (Glycyl lysine isopeptide (Lys-Gly) (interchain with G-Cter in SUMO)).

Belongs to the TNF receptor-associated factor family. A subfamily. In terms of assembly, homotrimer. Homooligomer. N-terminal region is dimeric while C-terminal region is trimeric; maybe providing a mode of oligomerization. Upon IL1B treatment, forms a complex with PELI1, IRAK1, IRAK4 and MYD88; this complex recruits MAP3K7/TAK1, TAB1 and TAB2 to mediate NF-kappa-B activation. Direct binding of SMAD6 to PELI1 prevents the complex formation and hence negatively regulates IL1R-TLR signaling and eventually NF-kappa-B-mediated gene expression. Binds to TNFRSF5/CD40 and TNFRSF11A/RANK. Associates with NGFR, TNFRSF17, IRAK2, IRAK3, RIPK2, MAP3K1, MAP3K5, MAP3K14, CSK, TRAF, TRAF-interacting protein TRIP and TNF receptor associated protein TDP2. Interacts with IL17R. Interacts with SQSTM1 bridging NTRK1 and NGFR. Forms a ternary complex with SQSTM1 and PRKCZ. Interacts with PELI2 and PELI3. Binds UBE2V1. Interacts with TAX1BP1; this interaction mediates deubiquitination of TRAF6 and inhibition of NF-kappa-B activation. Interacts with ZNF675. Interacts with ARRB1 and ARRB2. Interacts with MAP3K7 and TAB1/MAP3K7IP1; during IL-1 signaling. Interacts with UBE2N. Interacts with TGFBR1, HDAC1 and RANGAP1. Interacts with AKT1, AKT2 and AKT3. Interacts (via TRAF domains) with NUMBL (via C-terminal). Interacts with RBCK1. Interacts with LIMD1 (via LIM domains). Interacts with RSAD2/viperin. Interacts (via C-terminus) with EIF2AK2/PKR (via the kinase catalytic domain). Interacts with ZFAND5. Interacts with IL1RL1. Interacts with TRAFD1. Interacts with AJUBA. Interacts with MAVS/IPS1. Interacts (via TRAF domains) with DYNC2I2 (via WD domains). Interacts with IFIT3 (via N-terminus). Interacts with TICAM2. Interacts with CARD14. Interacts with CD40 and MAP3K8; the interaction is required for ERK activation. Interacts with TICAM1 and this interaction is enhanced in the presence of WDFY1. Interacts with TANK; this interaction increases in response to DNA damage. Interacts with USP10; this interaction increases in response to DNA damage. Interacts with ZC3H12A; this interaction increases in response to DNA damage and is stimulated by TANK. Interacts with WDFY3. Interacts with TRIM13. Interacts with GPS2. Interacts (via C-terminus) with SASH1. Interacts with LRRC19. Interacts with IL17RA and TRAF3IP2. Interacts with TOMM70. Interacts with AMBRA1; interaction is required to mediate 'Lys-63'-linked ubiquitination of ULK1. Interacts with CRBN; this interaction inhibits TLR4-mediated signaling by preventing TRAF6-mediated ubiquitination of ECSIT. Post-translationally, sumoylated on Lys-124, Lys-142 and Lys-453 with SUMO1. In terms of processing, polyubiquitinated on Lys-124 by TRAF3IP2; after cell stimulation with IL17A. Polyubiquitinated on Lys-124; after cell stimulation with IL1B or TGFB. This ligand-induced cell stimulation leads to dimerization/oligomerization of TRAF6 molecules, followed by auto-ubiquitination which involves UBE2N and UBE2V1 and leads to TRAF6 activation. This 'Lys-63' site-specific poly-ubiquitination appears to be associated with the activation of signaling molecules. Deubiquitinated by USP10 in a TANK-dependent manner, leading to the negative regulation of NF-kappa-B signaling upon DNA damage. LRRC19 induces 'Lys-63' ubiquitination. Ubiquitinated at Lys-319 by the SCF(FBXL2) complex, leading to its degradation by the proteasome.

The protein resides in the cytoplasm. It localises to the cell cortex. It is found in the nucleus. Its subcellular location is the lipid droplet. It catalyses the reaction S-ubiquitinyl-[E2 ubiquitin-conjugating enzyme]-L-cysteine + [acceptor protein]-L-lysine = [E2 ubiquitin-conjugating enzyme]-L-cysteine + N(6)-ubiquitinyl-[acceptor protein]-L-lysine.. It functions in the pathway protein modification; protein ubiquitination. In terms of biological role, E3 ubiquitin ligase that, together with UBE2N and UBE2V1, mediates the synthesis of 'Lys-63'-linked-polyubiquitin chains conjugated to proteins, such as ECSIT, IKBKG, IRAK1, AKT1 and AKT2. Also mediates ubiquitination of free/unanchored polyubiquitin chain that leads to MAP3K7 activation. Leads to the activation of NF-kappa-B and JUN. Seems to also play a role in dendritic cells (DCs) maturation and/or activation. Represses c-Myb-mediated transactivation, in B-lymphocytes. Adapter protein that seems to play a role in signal transduction initiated via TNF receptor, IL-1 receptor and IL-17 receptor. Regulates osteoclast differentiation by mediating the activation of adapter protein complex 1 (AP-1) and NF-kappa-B, in response to RANK-L stimulation. Together with MAP3K8, mediates CD40 signals that activate ERK in B-cells and macrophages, and thus may play a role in the regulation of immunoglobulin production. Acts as a regulator of the JNK and NF-kappa-B signaling pathways by initiating assembly of heterotypic 'Lys-63'-/'Lys-48'-linked branched ubiquitin chains that are then recognized by TAB2: TRAF6 catalyzes initial 'Lys-63'-linked-polyubiquitin chains that are then branched via 'Lys-48'-linked polyubiquitin by HUWE1. 'Lys-63'-/'Lys-48'-linked branched ubiquitin chains protect 'Lys-63'-linkages from CYLD deubiquitination. Also participates in the TCR signaling by ubiquitinating LAT. The polypeptide is TNF receptor-associated factor 6 (TRAF6) (Cercocebus atys (Sooty mangabey)).